A 280-amino-acid polypeptide reads, in one-letter code: Aspartate/glutamate leucyltransferase (280 aa).

Belongs to the R-transferase family. Bpt subfamily.

It is found in the cytoplasm. The catalysed reaction is N-terminal L-glutamyl-[protein] + L-leucyl-tRNA(Leu) = N-terminal L-leucyl-L-glutamyl-[protein] + tRNA(Leu) + H(+). It catalyses the reaction N-terminal L-aspartyl-[protein] + L-leucyl-tRNA(Leu) = N-terminal L-leucyl-L-aspartyl-[protein] + tRNA(Leu) + H(+). Its function is as follows. Functions in the N-end rule pathway of protein degradation where it conjugates Leu from its aminoacyl-tRNA to the N-termini of proteins containing an N-terminal aspartate or glutamate. This chain is Aspartate/glutamate leucyltransferase, found in Cereibacter sphaeroides (strain KD131 / KCTC 12085) (Rhodobacter sphaeroides).